A 1371-amino-acid polypeptide reads, in one-letter code: uncharacterized protein (1371 aa).

Positions 1020 to 1048 (WYLSSSKNTPEPRPDPEPTPEGHDNNLRP) are disordered. Positions 1029 to 1046 (PEPRPDPEPTPEGHDNNL) are enriched in basic and acidic residues. Positions 1083 to 1371 (GEPKATSMWM…SAMLGVKYTF (289 aa)) constitute an Autotransporter domain.

It is found in the cell outer membrane. This is an uncharacterized protein from Escherichia coli (strain K12).